The following is a 102-amino-acid chain: Small ribosomal subunit protein uS10 (102 aa).

Belongs to the universal ribosomal protein uS10 family. In terms of assembly, part of the 30S ribosomal subunit.

Its function is as follows. Involved in the binding of tRNA to the ribosomes. The protein is Small ribosomal subunit protein uS10 of Coprothermobacter proteolyticus (strain ATCC 35245 / DSM 5265 / OCM 4 / BT).